The chain runs to 778 residues: Centromere/kinetochore protein zw10 homolog (778 aa).

Residues 47-99 (FDRLENLEDIAEMSTRNLSNLIDQTAKDSPEMLAEIKSQAQSCENLVEFLQSM) adopt a coiled-coil conformation.

Belongs to the ZW10 family. In terms of assembly, component of the RZZ complex composed of rod-1, czw-1 and zwl-1.

The protein resides in the chromosome. It localises to the centromere. The protein localises to the kinetochore. Its subcellular location is the cytoplasm. It is found in the cytoskeleton. The protein resides in the spindle. Essential component of the mitotic checkpoint, which prevents cells from prematurely exiting mitosis. Required for the assembly of the dynein-dynactin and mdf-1-mdf-2 complexes onto kinetochores. Its function related to the spindle assembly machinery and kinetochore-microtubule attachments likely depends on its association in the mitotic RZZ complex. The RZZ complex recruits the spindly-like protein spdl-1 to kinetochores. To prevent irregular chromosome segregation, the complex also inhibits the attachment of the kinetochore-associated NDC80 complex to microtubules. The recruitment of spdl-1 to kinetochores relieves this inhibition. Required for embryonic development. The polypeptide is Centromere/kinetochore protein zw10 homolog (Caenorhabditis elegans).